The following is a 227-amino-acid chain: Peroxisomal membrane protein 11B (227 aa).

Residues 1–85 are Cytoplasmic-facing; that stretch reads MSLDTVDKLV…RNPGATPMIR (85 aa). The helical transmembrane segment at 86-106 threads the bilayer; sequence FLAVLANSGEMVYFFFDHFLW. The Lumenal segment spans residues 107–201; it reads LSRIGSIDAK…IALAEIHPNP (95 aa). A helical membrane pass occupies residues 202–222; it reads FCNHTITLGISGLVSAWAGWY. Residues 223–227 are Cytoplasmic-facing; it reads RNWPS.

Belongs to the peroxin-11 family. In terms of assembly, homooligomer. Interacts with ARC5 and FIS1B on peroxisomes. Expressed in roots, leaves and developing siliques.

The protein resides in the peroxisome membrane. In terms of biological role, involved in peroxisomal proliferation. Promotes peroxisomal duplication, aggregation or elongation without fission. The protein is Peroxisomal membrane protein 11B (PEX11B) of Arabidopsis thaliana (Mouse-ear cress).